Consider the following 202-residue polypeptide: ATP-dependent Clp protease proteolytic subunit 1 (202 aa).

The active-site Nucleophile is Ser-101. Residue His-126 is part of the active site.

Belongs to the peptidase S14 family. Fourteen ClpP subunits assemble into 2 heptameric rings which stack back to back to give a disk-like structure with a central cavity, resembling the structure of eukaryotic proteasomes.

It localises to the cytoplasm. It carries out the reaction Hydrolysis of proteins to small peptides in the presence of ATP and magnesium. alpha-casein is the usual test substrate. In the absence of ATP, only oligopeptides shorter than five residues are hydrolyzed (such as succinyl-Leu-Tyr-|-NHMec, and Leu-Tyr-Leu-|-Tyr-Trp, in which cleavage of the -Tyr-|-Leu- and -Tyr-|-Trp bonds also occurs).. In terms of biological role, cleaves peptides in various proteins in a process that requires ATP hydrolysis. Has a chymotrypsin-like activity. Plays a major role in the degradation of misfolded proteins. In Rhizobium etli (strain ATCC 51251 / DSM 11541 / JCM 21823 / NBRC 15573 / CFN 42), this protein is ATP-dependent Clp protease proteolytic subunit 1.